A 552-amino-acid chain; its full sequence is Undecaprenyl phosphate-alpha-4-amino-4-deoxy-L-arabinose arabinosyl transferase (552 aa).

The next 11 membrane-spanning stretches (helical) occupy residues 4-24, 81-101, 113-133, 176-196, 207-227, 255-275, 289-309, 313-333, 351-371, 384-404, and 411-431; these read IAGW…PLPG, FAVR…VFWL, VVAV…SYAV, FMTK…PWVI, FGPL…LAIA, APFW…LGLL, QGGD…FSIA, LPTY…GYVQ, LLVG…WGIT, VILG…SLYH, and WSAA…PQQV.

It belongs to the glycosyltransferase 83 family.

The protein resides in the cell inner membrane. It catalyses the reaction 4-amino-4-deoxy-alpha-L-arabinopyranosyl di-trans,octa-cis-undecaprenyl phosphate + lipid IVA = lipid IIA + di-trans,octa-cis-undecaprenyl phosphate.. It functions in the pathway lipopolysaccharide metabolism; 4-amino-4-deoxy-beta-L-arabinose-lipid A biosynthesis. Functionally, catalyzes the transfer of the L-Ara4N moiety of the glycolipid undecaprenyl phosphate-alpha-L-Ara4N to lipid A. The modified arabinose is attached to lipid A and is required for resistance to polymyxin and cationic antimicrobial peptides. The protein is Undecaprenyl phosphate-alpha-4-amino-4-deoxy-L-arabinose arabinosyl transferase of Edwardsiella ictaluri (strain 93-146).